The chain runs to 478 residues: MQQILEHIVGIANDLLWSKLLIVLLLSFGIYFTFRLKFLQVRMLKEMVRVLREGAASRSKNSISPFQAFCISMAARVGTGNITGIAIAIALGGPGAIFWMWIIAIIGSASSFVESTLAQIYKVKDVNGFRGGPAYYMEKGLNKRWMGALFAVLITLSFGIVFNSVQSNTVSLAFENAFGTNRLTLGLILIAVFGTIIFGGVKRIAKLAESIVVVLAVLYIGVAFFVIFSNITQLPGVLALIVKNAFGFDQAAGGALGAALMQGVRRGIFSNEAGMGSAPNAAATATTSHPVKQGLIQAFGVLTDTLVICTSTAFIILFSDAYHTPGLSGIALTQASLSSHVGSWASGFLAILILLFGFCALIGNYYYGETNIGFLNKSKKLIFVYRIGVLAMIVFGCVAKVQLVWDLADLFMGLMVIVNLIAIFLLSKVVFTALKDYTRQKKAGKDPVFYKDVLKNHNGIECWPVSDTKTDTHNKQIS.

The next 10 membrane-spanning stretches (helical) occupy residues 14-34, 85-105, 145-165, 185-205, 211-231, 236-256, 298-318, 342-362, 381-401, and 411-431; these read DLLW…YFTF, IAIA…IIAI, WMGA…FNSV, LGLI…KRIA, IVVV…FSNI, GVLA…GGAL, AFGV…IILF, GSWA…CALI, LIFV…VAKV, and FMGL…KVVF.

The protein belongs to the alanine or glycine:cation symporter (AGCS) (TC 2.A.25) family.

The protein localises to the cell membrane. In terms of biological role, probably functions as a sodium/glutamine symporter for glutamine uptake. The sequence is that of Probable sodium/glutamine symporter GlnT (glnT) from Bacillus subtilis (strain 168).